A 448-amino-acid polypeptide reads, in one-letter code: uncharacterized protein (448 aa).

Positions 428-440 are enriched in polar residues; it reads PFKTDCDPNNDND. The disordered stretch occupies residues 428-448; that stretch reads PFKTDCDPNNDNDLTPPAVFG.

This is an uncharacterized protein from Mycoplasma pneumoniae (strain ATCC 29342 / M129 / Subtype 1) (Mycoplasmoides pneumoniae).